The sequence spans 475 residues: tRNA-2-methylthio-N(6)-dimethylallyladenosine synthase (475 aa).

Residues 1–10 are compositionally biased toward basic and acidic residues; sequence MHETTLKREG. A disordered region spans residues 1–25; it reads MHETTLKREGASTPSNPTPSTHAAG. Residues 12-23 are compositionally biased toward polar residues; sequence STPSNPTPSTHA. The MTTase N-terminal domain maps to 27–144; sequence GKIYIRTFGC…LPELIRRRRD (118 aa). Residues Cys-36, Cys-73, Cys-107, Cys-181, Cys-185, and Cys-188 each coordinate [4Fe-4S] cluster. One can recognise a Radical SAM core domain in the interval 167–400; sequence RVEGATAFVS…QALINEQAAA (234 aa). One can recognise a TRAM domain in the interval 403 to 466; it reads QSMVGTRQRL…TNSLRGRVAG (64 aa).

It belongs to the methylthiotransferase family. MiaB subfamily. Monomer. The cofactor is [4Fe-4S] cluster.

It localises to the cytoplasm. The catalysed reaction is N(6)-dimethylallyladenosine(37) in tRNA + (sulfur carrier)-SH + AH2 + 2 S-adenosyl-L-methionine = 2-methylsulfanyl-N(6)-dimethylallyladenosine(37) in tRNA + (sulfur carrier)-H + 5'-deoxyadenosine + L-methionine + A + S-adenosyl-L-homocysteine + 2 H(+). Functionally, catalyzes the methylthiolation of N6-(dimethylallyl)adenosine (i(6)A), leading to the formation of 2-methylthio-N6-(dimethylallyl)adenosine (ms(2)i(6)A) at position 37 in tRNAs that read codons beginning with uridine. The polypeptide is tRNA-2-methylthio-N(6)-dimethylallyladenosine synthase (Bordetella avium (strain 197N)).